The chain runs to 316 residues: MSQPNQIHNALYLAFQRLQWAGLRESVPLTLSENDLADLRGINEKISLSEVTDIYLPLSRLLNLNVGAKQQRGLALNEFLGHVPPKRPYIISIAGSVAVGKSTTARILQALLSHWPEHPKVDLITTDGFLYPLAELKRRGLLQRKGFPESYDMKALVEFISAIKAGEATVSSPIYSHITYDRIPDEQQWIRQPDILIIEGLNVLQTGQDSPVDTQRPFVSDFVDFSIYVDANESLLKKWYIDRFLQFRTGAFSSENSYFHHYSKLGDKEATATASNIWDTINGPNLTLNILPTRERAHLILQKGPDHLMDQVLLRK.

An ATP-binding site is contributed by 95 to 102; it reads GSVAVGKS.

The protein belongs to the prokaryotic pantothenate kinase family.

Its subcellular location is the cytoplasm. It carries out the reaction (R)-pantothenate + ATP = (R)-4'-phosphopantothenate + ADP + H(+). The protein operates within cofactor biosynthesis; coenzyme A biosynthesis; CoA from (R)-pantothenate: step 1/5. The chain is Pantothenate kinase from Shewanella halifaxensis (strain HAW-EB4).